Here is a 344-residue protein sequence, read N- to C-terminus: Uroporphyrinogen decarboxylase (344 aa).

Substrate-binding positions include 26-30 (RQAGR), D76, Y152, S207, and H323.

This sequence belongs to the uroporphyrinogen decarboxylase family. Homodimer.

It localises to the cytoplasm. It carries out the reaction uroporphyrinogen III + 4 H(+) = coproporphyrinogen III + 4 CO2. It participates in porphyrin-containing compound metabolism; protoporphyrin-IX biosynthesis; coproporphyrinogen-III from 5-aminolevulinate: step 4/4. In terms of biological role, catalyzes the decarboxylation of four acetate groups of uroporphyrinogen-III to yield coproporphyrinogen-III. This chain is Uroporphyrinogen decarboxylase, found in Hyphomonas neptunium (strain ATCC 15444).